Here is a 261-residue protein sequence, read N- to C-terminus: Imidazole glycerol phosphate synthase subunit HisF (261 aa).

Residues Asp16 and Asp135 contribute to the active site.

The protein belongs to the HisA/HisF family. As to quaternary structure, heterodimer of HisH and HisF.

The protein localises to the cytoplasm. The enzyme catalyses 5-[(5-phospho-1-deoxy-D-ribulos-1-ylimino)methylamino]-1-(5-phospho-beta-D-ribosyl)imidazole-4-carboxamide + L-glutamine = D-erythro-1-(imidazol-4-yl)glycerol 3-phosphate + 5-amino-1-(5-phospho-beta-D-ribosyl)imidazole-4-carboxamide + L-glutamate + H(+). It functions in the pathway amino-acid biosynthesis; L-histidine biosynthesis; L-histidine from 5-phospho-alpha-D-ribose 1-diphosphate: step 5/9. IGPS catalyzes the conversion of PRFAR and glutamine to IGP, AICAR and glutamate. The HisF subunit catalyzes the cyclization activity that produces IGP and AICAR from PRFAR using the ammonia provided by the HisH subunit. This chain is Imidazole glycerol phosphate synthase subunit HisF, found in Mycolicibacterium gilvum (strain PYR-GCK) (Mycobacterium gilvum (strain PYR-GCK)).